A 1085-amino-acid chain; its full sequence is Ankyrin repeat and IBR domain-containing protein 1 (1085 aa).

Residue Gly2 is the site of N-myristoyl glycine attachment. ANK repeat units follow at residues 45–75 (QHNT…NPNK) and 145–174 (KKNT…DLFA). A disordered region spans residues 282–322 (CQRSGVQMPTPPPSGYNAWDTLPSPRTPRTTRSSVTSPDEI). A compositionally biased stretch (low complexity) spans 304–319 (PSPRTPRTTRSSVTSP). A TRIAD supradomain region spans residues 330 to 570 (DTSLCDICMC…GGYYRCTRYE (241 aa)). 14 residues coordinate Zn(2+): Cys334, Cys337, Cys352, His354, Cys357, Cys360, Cys379, Cys384, Cys466, Cys469, His474, Cys479, Cys520, and Cys523. An RING-type 1 zinc finger spans residues 334–384 (CDICMCSISVFEDPVDMPCGHDFCRGCWEAFLNLKIQEGEAHNIFCPAYEC). An IBR-type zinc finger spans residues 402–479 (DKRYLQFDIK…LGEAHEPCDC (78 aa)). The segment at 520–549 (CANCKSPIQKNEGCNHMQCAKCKYDFCWIC) adopts an RING-type 2; atypical zinc-finger fold. Cys533 is an active-site residue. Zn(2+) contacts are provided by Cys538, Cys541, Cys546, Cys549, His556, and Cys566. Residues 576 to 641 (EEQSKEMTVE…RALKETEGGC (66 aa)) are a coiled coil. Ser738 carries the post-translational modification Phosphoserine. The tract at residues 764-808 (RRRHRQQRRRGDVHSLLSNPTDLDEPSESTFDLPEGSSGRRPGAS) is disordered. Positions 846–865 (EDDPNILLAIQLSLQESGLD) constitute a UIM domain. Phosphoserine is present on residues Ser879 and Ser906. Disordered regions lie at residues 884-907 (GSSL…ALSS), 921-959 (GADS…QDPS), and 1014-1085 (PPED…VHSV). A compositionally biased stretch (polar residues) spans 926 to 959 (PFSTDTLSSRPLSETRSDFCPSSSDLDSAGQDPS). Residues 1018 to 1033 (SVSKDTGVHEGERAQM) are compositionally biased toward basic and acidic residues. Residues 1068 to 1085 (ASQTPQTSSDWLEQVHSV) show a composition bias toward polar residues.

This sequence belongs to the RBR family.

It catalyses the reaction [E2 ubiquitin-conjugating enzyme]-S-ubiquitinyl-L-cysteine + [acceptor protein]-L-lysine = [E2 ubiquitin-conjugating enzyme]-L-cysteine + [acceptor protein]-N(6)-ubiquitinyl-L-lysine.. Its function is as follows. Might act as an E3 ubiquitin-protein ligase, or as part of E3 complex, which accepts ubiquitin from specific E2 ubiquitin-conjugating enzymes and then transfers it to substrates. This Mus musculus (Mouse) protein is Ankyrin repeat and IBR domain-containing protein 1 (Ankib1).